We begin with the raw amino-acid sequence, 219 residues long: Vacuolar protein sorting-associated protein 20 homolog 1 (219 aa).

A coiled-coil region spans residues 20–60 (SLKTQRRKLGQYQQKLEKVIEAEKQAARDLIREKRKDRALL). Residues 171-219 (PEVPTKESEESEKLDLPDVPTKTPVASNAEITPAESATKTKVLEEPLPA) form a disordered region. Residues 174–186 (PTKESEESEKLDL) are compositionally biased toward basic and acidic residues. A compositionally biased stretch (polar residues) spans 194–209 (PVASNAEITPAESATK).

It belongs to the SNF7 family. As to quaternary structure, component of the endosomal sorting required for transport complex III (ESCRT-III), composed at least of VPS2, VPS20, VPS24 and VPS32. Interacts with SKD1.

Its subcellular location is the endosome. Its function is as follows. Component of the ESCRT-III complex, which is required for multivesicular bodies (MVBs) formation and sorting of endosomal cargo proteins into MVBs. The ESCRT-III complex is probably involved in the concentration of MVB cargo. The sequence is that of Vacuolar protein sorting-associated protein 20 homolog 1 (VPS20.1) from Arabidopsis thaliana (Mouse-ear cress).